Reading from the N-terminus, the 618-residue chain is UvrABC system protein C (618 aa).

Residues 15–93 (RTPGVYLMKD…IKEHHPRYNI (79 aa)) enclose the GIY-YIG domain. Residues 203–238 (NNLLRELRERMKMAAEQMNYEEAAFLRDRIRAIEET) enclose the UVR domain.

Belongs to the UvrC family. As to quaternary structure, interacts with UvrB in an incision complex.

It is found in the cytoplasm. Its function is as follows. The UvrABC repair system catalyzes the recognition and processing of DNA lesions. UvrC both incises the 5' and 3' sides of the lesion. The N-terminal half is responsible for the 3' incision and the C-terminal half is responsible for the 5' incision. In Syntrophus aciditrophicus (strain SB), this protein is UvrABC system protein C.